The sequence spans 95 residues: Aspartyl/glutamyl-tRNA(Asn/Gln) amidotransferase subunit C (95 aa).

It belongs to the GatC family. In terms of assembly, heterotrimer of A, B and C subunits.

The enzyme catalyses L-glutamyl-tRNA(Gln) + L-glutamine + ATP + H2O = L-glutaminyl-tRNA(Gln) + L-glutamate + ADP + phosphate + H(+). It carries out the reaction L-aspartyl-tRNA(Asn) + L-glutamine + ATP + H2O = L-asparaginyl-tRNA(Asn) + L-glutamate + ADP + phosphate + 2 H(+). Its function is as follows. Allows the formation of correctly charged Asn-tRNA(Asn) or Gln-tRNA(Gln) through the transamidation of misacylated Asp-tRNA(Asn) or Glu-tRNA(Gln) in organisms which lack either or both of asparaginyl-tRNA or glutaminyl-tRNA synthetases. The reaction takes place in the presence of glutamine and ATP through an activated phospho-Asp-tRNA(Asn) or phospho-Glu-tRNA(Gln). The sequence is that of Aspartyl/glutamyl-tRNA(Asn/Gln) amidotransferase subunit C from Citrifermentans bemidjiense (strain ATCC BAA-1014 / DSM 16622 / JCM 12645 / Bem) (Geobacter bemidjiensis).